The chain runs to 567 residues: Zinc finger protein 143 (567 aa).

7 consecutive C2H2-type zinc fingers follow at residues 230–254 (FRCDYEGCGKLYTTAHHLKVHERSH), 260–284 (YQCDHGGCRKAFATGYGLKSHVRTH), 290–314 (YRCSEENCTKSFKTSGDLQKHVRTH), 320–344 (FKCPFEGCGRSFTTSNIRKVHIRTH), 350–374 (YYCSEPGCGRAFASATNYKNHVRIH), 380–404 (YVCTVPGCDKRFTEYSSLYKHHVVH), and 410–433 (YNCNHCGKTYKQISTLAMHKRTAH). The segment covering 506 to 520 (SATESGPQHSHNLGG) has biased composition (polar residues). The disordered stretch occupies residues 506–525 (SATESGPQHSHNLGGSESRP).

The protein belongs to the GLI C2H2-type zinc-finger protein family.

Its subcellular location is the nucleus. Transcriptional activator. Activates the gene for selenocysteine tRNA (tRNAsec). Binds to the activator element (AE) motif of the selenocysteine tRNA gene promoter. In Xenopus tropicalis (Western clawed frog), this protein is Zinc finger protein 143 (znf143).